The sequence spans 308 residues: 3'(2'),5'-bisphosphate nucleotidase 1 (308 aa).

N-acetylalanine is present on A2. The active-site Proton acceptor is D51. E74, D117, L119, and D120 together coordinate Mg(2+). T122 serves as the catalytic Proton acceptor. At T122 the chain carries Phosphothreonine. Positions 195, 198, 220, and 224 each coordinate AMP. S240 carries the post-translational modification Phosphoserine. K244 carries the post-translational modification N6-succinyllysine. D247 provides a ligand contact to Mg(2+).

This sequence belongs to the inositol monophosphatase superfamily. Requires Mg(2+) as cofactor. In terms of tissue distribution, highly expressed in kidney, liver, pancreas and heart. Detected at lower levels in brain, placenta, lung and skeletal muscle.

It carries out the reaction adenosine 3',5'-bisphosphate + H2O = AMP + phosphate. The catalysed reaction is adenosine 2',5'-bisphosphate + H2O = AMP + phosphate. It catalyses the reaction 3'-phosphoadenylyl sulfate + H2O = adenosine 5'-phosphosulfate + phosphate. The enzyme catalyses 1D-myo-inositol 1,4-bisphosphate + H2O = 1D-myo-inositol 4-phosphate + phosphate. It carries out the reaction 1D-myo-inositol 1,3,4-trisphosphate + H2O = 1D-myo-inositol 3,4-bisphosphate + phosphate. With respect to regulation, is very sensitive to inhibition by Li(+) (IC(50)=0.3 mM for hydrolysis of PAP; IC(50)=0.6 mM for hydrolysis of inositol-1,4-bis-phosphate). Is not affected by high Na(+) concentrations. Phosphatase that converts 3'(2')-phosphoadenosine 5'-phosphate (PAP) to AMP and inositol 1,4-bisphosphate (Ins(1,4)P2) to inositol 4-phosphate. Is also able to hydrolyze adenosine 3'-phosphate 5'-phosphosulfate (PAPS) to adenosine 5'-phosphosulfate (APS). Probably prevents the toxic accumulation of PAP, a compound which inhibits a variety of proteins, including PAPS-utilizing enzymes such as sulfotransferases, and RNA processing enzymes. Could also play a role in inositol recycling and phosphoinositide metabolism. Is not active on 3'-AMP, inositol-1-phosphate and inositol-1,4,5-triphosphate. The sequence is that of 3'(2'),5'-bisphosphate nucleotidase 1 (BPNT1) from Homo sapiens (Human).